The sequence spans 1373 residues: DNA-directed RNA polymerase subunit beta (1373 aa).

The protein belongs to the RNA polymerase beta chain family. In terms of assembly, the RNAP catalytic core consists of 2 alpha, 1 beta, 1 beta' and 1 omega subunit. When a sigma factor is associated with the core the holoenzyme is formed, which can initiate transcription.

It catalyses the reaction RNA(n) + a ribonucleoside 5'-triphosphate = RNA(n+1) + diphosphate. DNA-dependent RNA polymerase catalyzes the transcription of DNA into RNA using the four ribonucleoside triphosphates as substrates. The protein is DNA-directed RNA polymerase subunit beta of Rickettsia rickettsii (strain Iowa).